Consider the following 435-residue polypeptide: GTPase Der (435 aa).

2 consecutive EngA-type G domains span residues 3–167 (NIVA…KDEG) and 176–351 (PRIA…ENRG). GTP is bound by residues 9 to 16 (GRPNVGKS), 56 to 60 (DTGGY), 119 to 122 (NKSD), 182 to 189 (GRPNAGKS), 229 to 233 (DTAGI), and 294 to 297 (NKWD). A KH-like domain is found at 352–435 (KRIPTSELND…VPISIVYRKK (84 aa)).

This sequence belongs to the TRAFAC class TrmE-Era-EngA-EngB-Septin-like GTPase superfamily. EngA (Der) GTPase family. In terms of assembly, associates with the 50S ribosomal subunit.

In terms of biological role, GTPase that plays an essential role in the late steps of ribosome biogenesis. The protein is GTPase Der of Cytophaga hutchinsonii (strain ATCC 33406 / DSM 1761 / CIP 103989 / NBRC 15051 / NCIMB 9469 / D465).